Consider the following 338-residue polypeptide: Methionine synthase (338 aa).

Zn(2+) contacts are provided by His-210, Cys-212, Glu-234, and Cys-294.

This sequence belongs to the archaeal MetE family. It depends on Zn(2+) as a cofactor.

It participates in amino-acid biosynthesis; L-methionine biosynthesis via de novo pathway. Catalyzes the transfer of a methyl group to L-homocysteine resulting in methionine formation. The physiological methyl donor is unknown. The polypeptide is Methionine synthase (Pyrococcus horikoshii (strain ATCC 700860 / DSM 12428 / JCM 9974 / NBRC 100139 / OT-3)).